A 165-amino-acid chain; its full sequence is Cyclic pyranopterin monophosphate synthase (165 aa).

Substrate is bound by residues 83–85 and 120–121; these read FCH and ME. The active site involves Asp-135.

The protein belongs to the MoaC family. Homohexamer; trimer of dimers.

It carries out the reaction (8S)-3',8-cyclo-7,8-dihydroguanosine 5'-triphosphate = cyclic pyranopterin phosphate + diphosphate. The protein operates within cofactor biosynthesis; molybdopterin biosynthesis. Catalyzes the conversion of (8S)-3',8-cyclo-7,8-dihydroguanosine 5'-triphosphate to cyclic pyranopterin monophosphate (cPMP). The polypeptide is Cyclic pyranopterin monophosphate synthase (Xanthomonas oryzae pv. oryzae (strain MAFF 311018)).